Reading from the N-terminus, the 234-residue chain is Proteasome subunit alpha (234 aa).

The protein belongs to the peptidase T1A family. As to quaternary structure, the 20S proteasome core is composed of 14 alpha and 14 beta subunits that assemble into four stacked heptameric rings, resulting in a barrel-shaped structure. The two inner rings, each composed of seven catalytic beta subunits, are sandwiched by two outer rings, each composed of seven alpha subunits. The catalytic chamber with the active sites is on the inside of the barrel. Has a gated structure, the ends of the cylinder being occluded by the N-termini of the alpha-subunits. Is capped at one or both ends by the proteasome regulatory ATPase, PAN.

The protein localises to the cytoplasm. Its activity is regulated as follows. The formation of the proteasomal ATPase PAN-20S proteasome complex, via the docking of the C-termini of PAN into the intersubunit pockets in the alpha-rings, triggers opening of the gate for substrate entry. Interconversion between the open-gate and close-gate conformations leads to a dynamic regulation of the 20S proteasome proteolysis activity. Functionally, component of the proteasome core, a large protease complex with broad specificity involved in protein degradation. This Picrophilus torridus (strain ATCC 700027 / DSM 9790 / JCM 10055 / NBRC 100828 / KAW 2/3) protein is Proteasome subunit alpha.